Here is a 103-residue protein sequence, read N- to C-terminus: Large ribosomal subunit protein uL24 (103 aa).

Belongs to the universal ribosomal protein uL24 family. As to quaternary structure, part of the 50S ribosomal subunit.

Functionally, one of two assembly initiator proteins, it binds directly to the 5'-end of the 23S rRNA, where it nucleates assembly of the 50S subunit. One of the proteins that surrounds the polypeptide exit tunnel on the outside of the subunit. This is Large ribosomal subunit protein uL24 from Brucella abortus (strain S19).